A 1091-amino-acid chain; its full sequence is ATP-dependent helicase/deoxyribonuclease subunit B (1091 aa).

Belongs to the helicase family. AddB/RexB type 2 subfamily. In terms of assembly, heterodimer of AddA and RexB. The cofactor is Mg(2+).

Its function is as follows. The heterodimer acts as both an ATP-dependent DNA helicase and an ATP-dependent, dual-direction single-stranded exonuclease. Recognizes the chi site generating a DNA molecule suitable for the initiation of homologous recombination. This subunit has 5' -&gt; 3' nuclease activity but not helicase activity. The polypeptide is ATP-dependent helicase/deoxyribonuclease subunit B (Streptococcus pneumoniae (strain Hungary19A-6)).